We begin with the raw amino-acid sequence, 354 residues long: Tribbles homolog 3 (354 aa).

The segment at 1–127 (MRATPLAASA…QHVARPTEVL (127 aa)) is interaction with DDIT3/CHOP. The interval 36-61 (RDEPEPGPLPSLLPPSPPPASDLSPA) is disordered. Positions 41–55 (PGPLPSLLPPSPPPA) are enriched in pro residues. A Protein kinase domain is found at 68–315 (LGPYILLERE…ALGILLHPWL (248 aa)). Residues 320-333 (GRVSPPQSDRREMD) show a composition bias toward basic and acidic residues. The segment at 320-354 (GRVSPPQSDRREMDQVVPDGPQLEEAEEGEVGLYG) is disordered. Residues 341-354 (QLEEAEEGEVGLYG) are compositionally biased toward acidic residues.

This sequence belongs to the protein kinase superfamily. CAMK Ser/Thr protein kinase family. Tribbles subfamily. In terms of assembly, interacts with AKT1, AKT2, MAP2K1 and MAP2K7. Interacts with ATF4. Interacts with DDIT3/CHOP and inhibits its interaction with EP300/P300. Interacts with APOBEC3C. Interacts (via N-terminus) with APOBEC3A. Interacts with RELA. As to expression, highly expressed in liver. Not detected in heart, brain, spleen, lung, skeletal muscle, kidney or testis.

It is found in the nucleus. In terms of biological role, inactive protein kinase which acts as a regulator of the integrated stress response (ISR), a process for adaptation to various stress. Inhibits the transcriptional activity of DDIT3/CHOP and is involved in DDIT3/CHOP-dependent cell death during ER stress. May play a role in programmed neuronal cell death but does not appear to affect non-neuronal cells. Acts as a negative feedback regulator of the ATF4-dependent transcription during the ISR: while TRIB3 expression is promoted by ATF4, TRIB3 protein interacts with ATF4 and inhibits ATF4 transcription activity. Disrupts insulin signaling by binding directly to Akt kinases and blocking their activation. May bind directly to and mask the 'Thr-308' phosphorylation site in AKT1. Interacts with the NF-kappa-B transactivator p65 RELA and inhibits its phosphorylation and thus its transcriptional activation activity. Interacts with MAPK kinases and regulates activation of MAP kinases. Can inhibit APOBEC3A editing of nuclear DNA. The protein is Tribbles homolog 3 (Trib3) of Mus musculus (Mouse).